The primary structure comprises 139 residues: Large ribosomal subunit protein uL16 (139 aa).

A disordered region spans residues 1–23 (MLQPARTKYRKMHKGRMPGSAHR). The segment covering 7-16 (TKYRKMHKGR) has biased composition (basic residues).

The protein belongs to the universal ribosomal protein uL16 family. In terms of assembly, part of the 50S ribosomal subunit.

Its function is as follows. Binds 23S rRNA and is also seen to make contacts with the A and possibly P site tRNAs. This Myxococcus xanthus (strain DK1622) protein is Large ribosomal subunit protein uL16.